The following is a 694-amino-acid chain: Elongation factor G (694 aa).

In terms of domain architecture, tr-type G spans 8-287 (EDYRNFGIMA…AVVEFLPAPT (280 aa)). GTP contacts are provided by residues 17–24 (AHIDAGKT), 86–90 (DTPGH), and 140–143 (NKMD).

This sequence belongs to the TRAFAC class translation factor GTPase superfamily. Classic translation factor GTPase family. EF-G/EF-2 subfamily.

The protein localises to the cytoplasm. In terms of biological role, catalyzes the GTP-dependent ribosomal translocation step during translation elongation. During this step, the ribosome changes from the pre-translocational (PRE) to the post-translocational (POST) state as the newly formed A-site-bound peptidyl-tRNA and P-site-bound deacylated tRNA move to the P and E sites, respectively. Catalyzes the coordinated movement of the two tRNA molecules, the mRNA and conformational changes in the ribosome. This Brucella canis (strain ATCC 23365 / NCTC 10854 / RM-666) protein is Elongation factor G.